Here is a 326-residue protein sequence, read N- to C-terminus: Phospho-N-acetylmuramoyl-pentapeptide-transferase (326 aa).

A run of 9 helical transmembrane segments spans residues Ile-3–Ile-23, Thr-51–Phe-71, Val-79–Leu-99, Leu-115–Met-135, Val-138–Val-158, Gly-169–Ala-189, Met-195–Asn-215, Val-221–His-243, and Phe-306–Met-326.

The protein belongs to the glycosyltransferase 4 family. MraY subfamily. Mg(2+) is required as a cofactor.

The protein localises to the cell membrane. The catalysed reaction is UDP-N-acetyl-alpha-D-muramoyl-L-alanyl-gamma-D-glutamyl-L-lysyl-D-alanyl-D-alanine + di-trans,octa-cis-undecaprenyl phosphate = Mur2Ac(oyl-L-Ala-gamma-D-Glu-L-Lys-D-Ala-D-Ala)-di-trans,octa-cis-undecaprenyl diphosphate + UMP. It functions in the pathway cell wall biogenesis; peptidoglycan biosynthesis. Its function is as follows. Catalyzes the initial step of the lipid cycle reactions in the biosynthesis of the cell wall peptidoglycan: transfers peptidoglycan precursor phospho-MurNAc-pentapeptide from UDP-MurNAc-pentapeptide onto the lipid carrier undecaprenyl phosphate, yielding undecaprenyl-pyrophosphoryl-MurNAc-pentapeptide, known as lipid I. The chain is Phospho-N-acetylmuramoyl-pentapeptide-transferase from Streptococcus pneumoniae (strain ATCC 700669 / Spain 23F-1).